Reading from the N-terminus, the 114-residue chain is Neurotrophic factor BDNF precursor form (114 aa).

Cystine bridges form between Cys-14/Cys-81, Cys-59/Cys-110, and Cys-69/Cys-112.

Belongs to the NGF-beta family. As to quaternary structure, monomers and homodimers. Binds to NTRK2/TRKB. Can form heterodimers with other neurotrophin family members, such as NTF3 and NTF4 (in vitro), but the physiological relevance of this is not clear. BDNF precursor form: interacts with the heterodimer formed by NGFR and SORCS2. Mature BDNF has much lower affinity for the heterodimer formed by NGFR and SORCS2. Post-translationally, N-glycosylated and glycosulfated, contrary to mature BDNF. In terms of processing, mature BDNF is produced by proteolytic removal of the propeptide, catalyzed by a FURIN family member. In addition, the precursor form is proteolytically cleaved within the propeptide, but this is not an obligatory intermediate for the production of mature BDNF. Can be converted into mature BDNF by plasmin (PLG).

Its subcellular location is the secreted. Functionally, important signaling molecule that activates signaling cascades downstream of NTRK2. During development, promotes the survival and differentiation of selected neuronal populations of the peripheral and central nervous systems. Participates in axonal growth, pathfinding and in the modulation of dendritic growth and morphology. Major regulator of synaptic transmission and plasticity at adult synapses in many regions of the CNS. The versatility of BDNF is emphasized by its contribution to a range of adaptive neuronal responses including long-term potentiation (LTP), long-term depression (LTD), certain forms of short-term synaptic plasticity, as well as homeostatic regulation of intrinsic neuronal excitability. Its function is as follows. Important signaling molecule that activates signaling cascades downstream of NTRK2. Activates signaling cascades via the heterodimeric receptor formed by NGFR and SORCS2. Signaling via NGFR and SORCS2 plays a role in synaptic plasticity and long-term depression (LTD). Binding to NGFR and SORCS2 promotes neuronal apoptosis. Promotes neuronal growth cone collapse. This Macaca mulatta (Rhesus macaque) protein is Neurotrophic factor BDNF precursor form (BDNF).